Reading from the N-terminus, the 167-residue chain is 3-dehydroquinate dehydratase (167 aa).

Tyrosine 22 functions as the Proton acceptor in the catalytic mechanism. The substrate site is built by asparagine 76, histidine 82, and aspartate 89. Histidine 102 (proton donor) is an active-site residue. Substrate contacts are provided by residues 103–104 and arginine 113; that span reads LT.

This sequence belongs to the type-II 3-dehydroquinase family. Homododecamer.

The enzyme catalyses 3-dehydroquinate = 3-dehydroshikimate + H2O. It participates in metabolic intermediate biosynthesis; chorismate biosynthesis; chorismate from D-erythrose 4-phosphate and phosphoenolpyruvate: step 3/7. Its function is as follows. Catalyzes a trans-dehydration via an enolate intermediate. In Helicobacter pylori (strain Shi470), this protein is 3-dehydroquinate dehydratase.